The chain runs to 573 residues: Proton-coupled zinc antiporter SLC30A9, mitochondrial (573 aa).

The interval 66–108 (NCSTSGSGKDGSPTRPEEPKTTEKAQAAQPAAKGAGSKPQGLT) is disordered. The segment covering 90–104 (AQAAQPAAKGAGSKP) has biased composition (low complexity). The next 5 membrane-spanning stretches (helical) occupy residues 244–264 (VVMVAICINGLNFFFKLLAWV), 319–339 (GVGIFMMGAGLSWYHGIMGLL), 347–367 (LLWAYCILAGSLVSEGATLLV), 397–417 (VVLLEDAAAVLGVVLAAGCMG), and 429–449 (SLGSLGVGTLLGTVSAFLIYT). The LXXLL motif signature appears at 467–471 (LTEFL).

The protein belongs to the cation diffusion facilitator (CDF) transporter (TC 2.A.4) family. SLC30A subfamily.

It localises to the mitochondrion membrane. The protein localises to the nucleus. Its subcellular location is the endoplasmic reticulum. The enzyme catalyses Zn(2+)(in) + 2 H(+)(out) = Zn(2+)(out) + 2 H(+)(in). Its function is as follows. Mitochondrial proton-coupled zinc ion antiporter mediating the export of zinc from the mitochondria and involved in zinc homeostasis, zinc mobilization as well as mitochondrial morphology and health. In nucleus, may function as a secondary coactivator for nuclear receptors. This is Proton-coupled zinc antiporter SLC30A9, mitochondrial (slc30a9) from Danio rerio (Zebrafish).